A 259-amino-acid polypeptide reads, in one-letter code: UPF0246 protein NMA1114 (259 aa).

It belongs to the UPF0246 family.

This Neisseria meningitidis serogroup A / serotype 4A (strain DSM 15465 / Z2491) protein is UPF0246 protein NMA1114.